The primary structure comprises 65 residues: Small, acid-soluble spore protein 2 (65 aa).

Belongs to the alpha/beta-type SASP family.

Functionally, SASP are bound to spore DNA. They are double-stranded DNA-binding proteins that cause DNA to change to an a-like conformation. They protect the DNA backbone from chemical and enzymatic cleavage and are thus involved in dormant spore's high resistance to UV light. The polypeptide is Small, acid-soluble spore protein 2 (sasP-2) (Bacillus cereus).